A 398-amino-acid polypeptide reads, in one-letter code: Basic helix-loop-helix neural transcription factor TAP (398 aa).

2 disordered regions span residues 35–59 (ETEAQLSSRRRLDFGTPPTPAIPQP) and 102–144 (RATN…RSRS). The segment covering 127-141 (RPKRKYAVGKNRVTR) has biased composition (basic residues). Residues 154 to 206 (FRRMKANDRERNRMHNLNDALEKLRVTLPSLPEETKLTKIEILRFAHNYIFAL) enclose the bHLH domain. 2 disordered regions span residues 265 to 333 (AQHQ…QQFS) and 361 to 398 (QQSSFYSQTPPWKDYPEDQAHVHPVPHQHSYKNFAPQV). Residues 307 to 333 (HQQQQQPHQPHHLQPNPQQESSPQQFS) show a composition bias toward low complexity. The span at 361–370 (QQSSFYSQTP) shows a compositional bias: polar residues.

As to expression, expressed in neuronal and glial precursors during differentiation. In the peripheral nervous system, expression is exclusively in one of the neurons that innervate each larval chemosensory organ. Expressed at a late stage in the development of one type of adult chemosensory organ, the gustatory bristles of the leg, wing and proboscis. Expressed very early in the development of a second type of chemosensory receptors, the olfactory organs of the antenna.

Its subcellular location is the nucleus. In terms of biological role, may play a role in the specification of the sugar-sensitive adult gustatory neuron and affect the response to sugar and salt. Regulated by POXN. The polypeptide is Basic helix-loop-helix neural transcription factor TAP (tap) (Drosophila melanogaster (Fruit fly)).